Consider the following 285-residue polypeptide: Bifunctional protein FolD (285 aa).

Residues 164 to 166 (GRS), Ser-189, and Ile-230 each bind NADP(+).

This sequence belongs to the tetrahydrofolate dehydrogenase/cyclohydrolase family. In terms of assembly, homodimer.

It carries out the reaction (6R)-5,10-methylene-5,6,7,8-tetrahydrofolate + NADP(+) = (6R)-5,10-methenyltetrahydrofolate + NADPH. The enzyme catalyses (6R)-5,10-methenyltetrahydrofolate + H2O = (6R)-10-formyltetrahydrofolate + H(+). Its pathway is one-carbon metabolism; tetrahydrofolate interconversion. Functionally, catalyzes the oxidation of 5,10-methylenetetrahydrofolate to 5,10-methenyltetrahydrofolate and then the hydrolysis of 5,10-methenyltetrahydrofolate to 10-formyltetrahydrofolate. In Oceanobacillus iheyensis (strain DSM 14371 / CIP 107618 / JCM 11309 / KCTC 3954 / HTE831), this protein is Bifunctional protein FolD.